A 374-amino-acid polypeptide reads, in one-letter code: MSLEAFHHSEPLTLGVELELQLVSTNDYDLAPYAEDMLRLMKKVPLPGSVVPEMTNSMIEISTGVCHSSSEVLGQLTQIRDALVKSADKLNIAVVGGGTHPFQQWHERRIYDKPRFQELSQLYGYLSKQFTIFGQHVHIGCPDADSALLMLHRMSRYIPHFIALSASSPYVQAQDTQFDSARLNSVFAFPLSGRAPCVLTWSEFEQYFNKMTRTGVVKSMKDFYWDIRPKPEYGTIEIRVFDTPLTIERAAALAGYVQSLAAWFLAEQPFTPTEDDYLVYTYNRFQACRFGLDAVYVDPASGDHMPLRDHILQTLDHVARYAGTHGASGALHMLRGETALGQNDARWLRERQREEQLLAEVSRQAALRFRGHDI.

This sequence belongs to the glutamate--cysteine ligase type 2 family. YbdK subfamily.

It carries out the reaction L-cysteine + L-glutamate + ATP = gamma-L-glutamyl-L-cysteine + ADP + phosphate + H(+). Functionally, ATP-dependent carboxylate-amine ligase which exhibits weak glutamate--cysteine ligase activity. This Acidovorax ebreus (strain TPSY) (Diaphorobacter sp. (strain TPSY)) protein is Putative glutamate--cysteine ligase 2.